Reading from the N-terminus, the 251-residue chain is Aspartate/glutamate leucyltransferase (251 aa).

The protein belongs to the R-transferase family. Bpt subfamily.

It is found in the cytoplasm. The enzyme catalyses N-terminal L-glutamyl-[protein] + L-leucyl-tRNA(Leu) = N-terminal L-leucyl-L-glutamyl-[protein] + tRNA(Leu) + H(+). It carries out the reaction N-terminal L-aspartyl-[protein] + L-leucyl-tRNA(Leu) = N-terminal L-leucyl-L-aspartyl-[protein] + tRNA(Leu) + H(+). Functions in the N-end rule pathway of protein degradation where it conjugates Leu from its aminoacyl-tRNA to the N-termini of proteins containing an N-terminal aspartate or glutamate. This chain is Aspartate/glutamate leucyltransferase, found in Xanthomonas oryzae pv. oryzae (strain MAFF 311018).